Here is a 248-residue protein sequence, read N- to C-terminus: Putative mutator protein MutT4 (248 aa).

A disordered region spans residues 1–64; the sequence is MSDGEQAKSR…GSTRMRTVHE (64 aa). The segment covering 9–20 has biased composition (basic residues); it reads SRRRRGRRRGRR. Residues 31 to 44 show a composition bias toward low complexity; the sequence is AQPAGDATPTPATA. Positions 45-57 are enriched in basic residues; that stretch reads KRSRSRSPRRGST. In terms of domain architecture, Nudix hydrolase spans 62 to 198; it reads VHETSAGGLV…DERRLAEVAD (137 aa). Mg(2+) is bound by residues G103, E118, E121, and E122. The Nudix box signature appears at 103–124; that stretch reads GHIELGETAEQTAIREVAEETG. Positions 204-248 are disordered; it reads LQSDGPAALPPLPPSSPRRRPQTHSRARHADDSAPGQHNGPGPGP. Positions 220-230 are enriched in basic residues; that stretch reads PRRRPQTHSRA.

This sequence belongs to the Nudix hydrolase family. The cofactor is Mg(2+). It depends on Mn(2+) as a cofactor.

In terms of biological role, may be involved in the GO system responsible for removing an oxidatively damaged form of guanine (7,8-dihydro-8-oxoguanine, 8-oxo-dGTP) from DNA and the nucleotide pool. The chain is Putative mutator protein MutT4 (mutT4) from Mycobacterium tuberculosis (strain CDC 1551 / Oshkosh).